Here is a 351-residue protein sequence, read N- to C-terminus: N-formyl peptide receptor 2 (351 aa).

At 1–27 (METNFSTPLNEYEEVSYESAGYTVLRI) the chain is on the extracellular side. N-linked (GlcNAc...) asparagine glycosylation is present at asparagine 4. A helical membrane pass occupies residues 28-50 (LPLVVLGVTFVLGVLGNGLVIWV). Over 51–61 (AGFRMTRTVTT) the chain is Cytoplasmic. A helical transmembrane segment spans residues 62 to 83 (ICYLNLALADFSFTATLPFLIV). Over 84–100 (SMAMGEKWPFGWFLCKL) the chain is Extracellular. The cysteines at positions 98 and 176 are disulfide-linked. A helical transmembrane segment spans residues 101–121 (IHIVVDINLFGSVFLIGFIAL). Topologically, residues 122-140 (DRCICVLHPVWAQNHRTVS) are cytoplasmic. A helical membrane pass occupies residues 141–162 (LAMKVIVGPWILALVLTLPVFL). The Extracellular segment spans residues 163–205 (FLTTVTIPNGDTYCTFNFASWGGTPEERLKVAITMLTARGIIR). A helical transmembrane segment spans residues 206–226 (FVIGFSLPMSIVAICYGLIAA). Topologically, residues 227–242 (KIHKKGMIKSSRPLRV) are cytoplasmic. A helical transmembrane segment spans residues 243–266 (LTAVVASFFICWFPFQLVALLGTV). At 267 to 286 (WLKEMLFYGKYKIIDILVNP) the chain is on the extracellular side. Residues 287–306 (TSSLAFFNSCLNPMLYVFVG) form a helical membrane-spanning segment. The Cytoplasmic portion of the chain corresponds to 307 to 351 (QDFRERLIHSLPTSLERALSEDSAPTNDTAANSASPPAETELQAM). The disordered stretch occupies residues 325-351 (LSEDSAPTNDTAANSASPPAETELQAM). Residues 329–341 (SAPTNDTAANSAS) show a composition bias toward polar residues.

It belongs to the G-protein coupled receptor 1 family. As to quaternary structure, interacts with Amyloid-beta protein 42, product of APP; the interaction takes place at the cell surface and the complex is then rapidly internalized. (Microbial infection) Interacts with Staphylococcus aureus protein SSL13; this interaction leads to the activation of neutrophils. As to expression, detected in lung, bone marrow, neutrophils, spleen and testis.

It localises to the cell membrane. Low affinity receptor for N-formyl-methionyl peptides, which are powerful neutrophil chemotactic factors. Binding of FMLP to the receptor causes activation of neutrophils. This response is mediated via a G-protein that activates a phosphatidylinositol-calcium second messenger system. The activation of LXA4R could result in an anti-inflammatory outcome counteracting the actions of pro-inflammatory signals such as LTB4 (leukotriene B4). Receptor for the chemokine-like protein FAM19A5, mediating FAM19A5-stimulated macrophage chemotaxis and the inhibitory effect on TNFSF11/RANKL-induced osteoclast differentiation. Acts as a receptor for humanin. The sequence is that of N-formyl peptide receptor 2 (FPR2) from Homo sapiens (Human).